We begin with the raw amino-acid sequence, 237 residues long: Probable S-methyl-5'-thioinosine phosphorylase (237 aa).

Phosphate contacts are provided by residues threonine 12 and 54–55; that span reads RH. Methionine 187 is a substrate binding site. Residue threonine 188 participates in phosphate binding. Substrate is bound at residue 211–213; the sequence is NWA.

It belongs to the PNP/MTAP phosphorylase family. MTAP subfamily. As to quaternary structure, homotrimer.

The catalysed reaction is S-methyl-5'-thioinosine + phosphate = 5-(methylsulfanyl)-alpha-D-ribose 1-phosphate + hypoxanthine. Its pathway is purine metabolism; purine nucleoside salvage. Catalyzes the reversible phosphorylation of S-methyl-5'-thioinosine (MTI) to hypoxanthine and 5-methylthioribose-1-phosphate. Involved in the breakdown of S-methyl-5'-thioadenosine (MTA), a major by-product of polyamine biosynthesis. Catabolism of (MTA) occurs via deamination to MTI and phosphorolysis to hypoxanthine. This chain is Probable S-methyl-5'-thioinosine phosphorylase, found in Xylella fastidiosa (strain 9a5c).